Here is a 599-residue protein sequence, read N- to C-terminus: Purine-uracil permease NCS1 (599 aa).

The next 12 helical transmembrane spans lie at Leu-140 to Leu-160, Trp-164 to Leu-184, Leu-218 to Leu-238, Thr-257 to Trp-277, Ile-293 to Gly-313, Phe-327 to Leu-347, Ile-363 to Val-383, Thr-411 to Ala-433, Phe-445 to Trp-465, Phe-474 to Leu-494, Tyr-525 to Leu-545, and Val-560 to Ile-580.

It belongs to the purine-cytosine permease (2.A.39) family. Expressed in roots, leaves, stems, flowers, siliques and seeds.

It localises to the plastid. The protein resides in the chloroplast envelope. Its subcellular location is the chloroplast membrane. Functionally, nucleobase-proton symporter that facilitates the uptake of nucleobases in the cells. Can transport adenine, guanine and uracil. Contributes to uracil import into plastids for plastidic uracil salvage which is essential for plant growth and development. The polypeptide is Purine-uracil permease NCS1 (Arabidopsis thaliana (Mouse-ear cress)).